The following is a 284-amino-acid chain: Phosphonates import ATP-binding protein PhnC 2 (284 aa).

The region spanning 24–264 is the ABC transporter domain; sequence IRIDGISVRR…LEARIFPSLA (241 aa). 56–63 contributes to the ATP binding site; that stretch reads GPSGVGKT.

The protein belongs to the ABC transporter superfamily. Phosphonates importer (TC 3.A.1.9.1) family. As to quaternary structure, the complex is composed of two ATP-binding proteins (PhnC), two transmembrane proteins (PhnE) and a solute-binding protein (PhnD).

It localises to the cell inner membrane. The enzyme catalyses phosphonate(out) + ATP + H2O = phosphonate(in) + ADP + phosphate + H(+). Functionally, part of the ABC transporter complex PhnCDE involved in phosphonates import. Responsible for energy coupling to the transport system. This Rhodopseudomonas palustris (strain ATCC BAA-98 / CGA009) protein is Phosphonates import ATP-binding protein PhnC 2.